An 84-amino-acid polypeptide reads, in one-letter code: Small ribosomal subunit protein uS17 (84 aa).

This sequence belongs to the universal ribosomal protein uS17 family. As to quaternary structure, part of the 30S ribosomal subunit.

Functionally, one of the primary rRNA binding proteins, it binds specifically to the 5'-end of 16S ribosomal RNA. In Clostridium kluyveri (strain NBRC 12016), this protein is Small ribosomal subunit protein uS17.